Here is a 229-residue protein sequence, read N- to C-terminus: Cytochrome c oxidase subunit 2 (229 aa).

Residues 1 to 26 lie on the Mitochondrial intermembrane side of the membrane; that stretch reads MANWTQLGLQDASSPLMEELIYFHDY. A helical membrane pass occupies residues 27–48; the sequence is TLIILTLITILVFYGLASLIVS. Topologically, residues 49–62 are mitochondrial matrix; sequence SNTNRFFLEGQSLE. A helical membrane pass occupies residues 63–82; it reads TIWTVIPAVILIFIALPSLQ. Topologically, residues 83-229 are mitochondrial intermembrane; that stretch reads LLYLIDEVNN…ENWVSNFLNE (147 aa). The Cu cation site is built by H161, C196, E198, C200, H204, and M207. E198 lines the Mg(2+) pocket.

Belongs to the cytochrome c oxidase subunit 2 family. In terms of assembly, component of the cytochrome c oxidase (complex IV, CIV), a multisubunit enzyme composed of a catalytic core of 3 subunits and several supernumerary subunits. The complex exists as a monomer or a dimer and forms supercomplexes (SCs) in the inner mitochondrial membrane with ubiquinol-cytochrome c oxidoreductase (cytochrome b-c1 complex, complex III, CIII). Requires Cu cation as cofactor.

The protein resides in the mitochondrion inner membrane. It catalyses the reaction 4 Fe(II)-[cytochrome c] + O2 + 8 H(+)(in) = 4 Fe(III)-[cytochrome c] + 2 H2O + 4 H(+)(out). Its function is as follows. Component of the cytochrome c oxidase, the last enzyme in the mitochondrial electron transport chain which drives oxidative phosphorylation. The respiratory chain contains 3 multisubunit complexes succinate dehydrogenase (complex II, CII), ubiquinol-cytochrome c oxidoreductase (cytochrome b-c1 complex, complex III, CIII) and cytochrome c oxidase (complex IV, CIV), that cooperate to transfer electrons derived from NADH and succinate to molecular oxygen, creating an electrochemical gradient over the inner membrane that drives transmembrane transport and the ATP synthase. Cytochrome c oxidase is the component of the respiratory chain that catalyzes the reduction of oxygen to water. Electrons originating from reduced cytochrome c in the intermembrane space (IMS) are transferred via the dinuclear copper A center (CU(A)) of subunit 2 and heme A of subunit 1 to the active site in subunit 1, a binuclear center (BNC) formed by heme A3 and copper B (CU(B)). The BNC reduces molecular oxygen to 2 water molecules using 4 electrons from cytochrome c in the IMS and 4 protons from the mitochondrial matrix. The sequence is that of Cytochrome c oxidase subunit 2 (COII) from Pisaster ochraceus (Ochre sea star).